The following is an 80-amino-acid chain: Conotoxin SmIVB (80 aa).

An N-terminal signal peptide occupies residues Met-1–Ser-21. Residues Ile-22–Arg-38 constitute a propeptide that is removed on maturation. At Pro-40 the chain carries 4-hydroxyproline. O-linked (HexNAc...) serine glycosylation is present at Ser-45. 4-hydroxyproline occurs at positions 55, 60, 61, 70, and 72. Ser-75 is modified (serine amide). The propeptide occupies Gly-76–His-80.

This sequence belongs to the conotoxin A superfamily. Contains 3 disulfide bonds. As to expression, expressed by the venom duct.

It is found in the secreted. Neurotoxin with probable activity on sodium channel. Induces intense repetitive firing of the frog neuromuscular junction, leading to a tetanic contracture in muscle fiber (spastic paralysis). In vivo, shows the same effect as the whole venom when injected on fish prey. The polypeptide is Conotoxin SmIVB (Conus stercusmuscarum (Fly-specked cone)).